We begin with the raw amino-acid sequence, 880 residues long: MCSETGTGVPERNGCADSFSPSVMIARKLYGCDLCERLLTNPRMAGMSLDRQHGHPITFPLPIRTKPVLVARAPMGSGKTTALIDWLTAFLDSEDKSAVIVSCRRSFTNSLSRRFQRDGLTGFTTYLDSDQYVLTEAAHRRLLVQLESLQRISDSLLDRYDVLVVDEVMSIVAQFFSPTMRRLRLVDSMFTSLLRRCRHVIAMDATVNATLVELLAELRGAENVHVVVSDFVSRGFANRECVVMSSLGAALPASMVRYAPPAGDESREASASQPPPHDSSNEPCAPEITDADIESTEGSFFHELHVRLLQGENVCVFSSTLAFSRIVAFFCAEVLSPDAVLLLNSTSPPVDTSDWSRYKVVVYTTVVTVGLSFDDSHFHTMFAFVKPSIHGPDMMAVYQAMGRVRSLIRDRLFMYMDVSSANEGPTFTPMLLNAEIGSATAWPPEILIPANTMCLRFKDRCSSALLDHHRALFSRFKTKHYLERSTLTSANDSFSLLHTLLANNKIAVRMRGDRPDAPASAILVEDFGRFLSRLRTDAFSNRRFLRRITYAIEEAASAMRERVALRNPTAEETVMMLAENQAARSCMERFFGLRGAVDDYGEPIIALMKDMGDVPLVAARLVNAAVIEAGCACSAGEWYVVDLAAEHASHGSSEFDKWMNYYLDEPLVSLKRGRPEEVQIPIQPGIRGRTALLRACVNVARQIGWRPTTWNDDAELEAADVERAMATAIEAGLGKFALEYMRLNFTEPSWLTGPIRNLQRFLGARKRHAAHGIGPSEQRKESPEICIFRTLWAELFGVRILKSQRTFPGTTRVKNLRKEHLKALLDRIEVRYPESSTHKQLYGLLRENQYRFSNSPKLLLRTPDWMRQLSGNRPQAEQAP.

Residues Pro60 to His225 enclose the Helicase ATP-binding domain. Ala73–Thr80 serves as a coordination point for ATP. Residues Pro260 to Glu287 are disordered.

It belongs to the herpesviridae OriBP family. In terms of assembly, homodimer. Interacts with the major DNA-binding protein. Interacts with the DNA helicase/primase complex-associated protein and the polymerase accessory protein.

It is found in the host nucleus. Functions as a docking protein to recruit essential components of the viral replication machinery to viral DNA origins. In the presence of the major DNA-binding protein, opens dsDNA leading to a conformational change in the origin that facilitates DNA unwinding and subsequent replication. This Psittacid herpesvirus 1 (isolate Amazon parrot/-/97-0001/1997) (PsHV-1) protein is Replication origin-binding protein (UL9).